We begin with the raw amino-acid sequence, 392 residues long: tRNA (guanine(6)-N2)-methyltransferase (392 aa).

A THUMP domain is found at 73 to 183; it reads SAIPLLNHFS…DSELFVGVDT (111 aa). Residues 199–203, 230–232, Glu275, 303–304, and Asn317 contribute to the S-adenosyl-L-methionine site; these read HPAHL, SGT, and DA.

The protein belongs to the methyltransferase superfamily.

It localises to the cytoplasm. The catalysed reaction is guanosine(6) in tRNA + S-adenosyl-L-methionine = N(2)-methylguanosine(6) in tRNA + S-adenosyl-L-homocysteine + H(+). S-adenosyl-L-methionine-dependent methyltransferase that catalyzes the methylation of the guanosine nucleotide at position 6 (m2G6) in tRNA. The sequence is that of tRNA (guanine(6)-N2)-methyltransferase from Archaeoglobus fulgidus (strain ATCC 49558 / DSM 4304 / JCM 9628 / NBRC 100126 / VC-16).